A 140-amino-acid chain; its full sequence is ATP synthase epsilon chain (140 aa).

Belongs to the ATPase epsilon chain family. As to quaternary structure, F-type ATPases have 2 components, CF(1) - the catalytic core - and CF(0) - the membrane proton channel. CF(1) has five subunits: alpha(3), beta(3), gamma(1), delta(1), epsilon(1). CF(0) has three main subunits: a, b and c.

It is found in the cell inner membrane. Functionally, produces ATP from ADP in the presence of a proton gradient across the membrane. The chain is ATP synthase epsilon chain from Sodalis glossinidius (strain morsitans).